A 140-amino-acid chain; its full sequence is UPF0654 protein C22G7.11c (140 aa).

2 disordered regions span residues 1–88 (MPDP…DPMK) and 110–140 (YKAT…ETQA). Residues 24-33 (AKERAEDYIE) are compositionally biased toward basic and acidic residues. The segment covering 34-44 (SHSSGQETGDY) has biased composition (polar residues). A compositionally biased stretch (acidic residues) spans 54–71 (DYEDLGDYDEDADFDNEE).

This sequence belongs to the UPF0654 (con-6) family.

This chain is UPF0654 protein C22G7.11c, found in Schizosaccharomyces pombe (strain 972 / ATCC 24843) (Fission yeast).